Consider the following 579-residue polypeptide: DELLA protein GAIP (579 aa).

The interval Met1–Ser25 is disordered. A DELLA motif motif is present at residues Asp46–Ala50. Residues Val202–Lys570 enclose the GRAS domain. The leucine repeat I (LRI) stretch occupies residues Ile209–Ile263. The tract at residues Gln281–Gly346 is VHIID. The VHIID motif lies at Val312 to Asp316. A leucine repeat II (LRII) region spans residues Asp360–Ser392. Residues Val404–Asn491 form a PFYRE region. The LXXLL motif signature appears at Leu412–Leu416. An SAW region spans residues Ala494–Lys570.

Belongs to the GRAS family. DELLA subfamily. Post-translationally, phosphorylated. In terms of processing, ubiquitinated. Upon GA application it is ubiquitinated, leading to its subsequent degradation.

It is found in the nucleus. Functionally, probable transcriptional regulator that acts as a repressor of the gibberellin (GA) signaling pathway. Probably acts by participating in large multiprotein complexes that represses transcription of GA-inducible genes. Upon GA application, it is degraded by the proteasome, allowing the GA signaling pathway. The polypeptide is DELLA protein GAIP (GAIP) (Cucurbita maxima (Pumpkin)).